We begin with the raw amino-acid sequence, 313 residues long: Porphobilinogen deaminase (313 aa).

C242 carries the S-(dipyrrolylmethanemethyl)cysteine modification.

Belongs to the HMBS family. In terms of assembly, monomer. Dipyrromethane serves as cofactor.

The catalysed reaction is 4 porphobilinogen + H2O = hydroxymethylbilane + 4 NH4(+). Its pathway is porphyrin-containing compound metabolism; protoporphyrin-IX biosynthesis; coproporphyrinogen-III from 5-aminolevulinate: step 2/4. Tetrapolymerization of the monopyrrole PBG into the hydroxymethylbilane pre-uroporphyrinogen in several discrete steps. This is Porphobilinogen deaminase from Pseudomonas aeruginosa (strain LESB58).